We begin with the raw amino-acid sequence, 331 residues long: Probable cytosolic iron-sulfur protein assembly protein Ciao1 (331 aa).

WD repeat units follow at residues 12-51, 57-96, 97-136, 142-181, 188-227, 246-285, and 297-331; these read GHKG…WTTK, GHKR…ATLE, GHEN…EFEC, AHSQ…SDWD, SHTS…NEAG, LHTR…KRDA, and AHEQ…KLQE.

The protein belongs to the WD repeat CIA1 family.

In terms of biological role, essential component of the cytosolic iron-sulfur (Fe/S) protein assembly machinery. Required for the maturation of extramitochondrial Fe/S proteins. This is Probable cytosolic iron-sulfur protein assembly protein Ciao1 from Drosophila mojavensis (Fruit fly).